Here is a 357-residue protein sequence, read N- to C-terminus: Phosphoribosylformylglycinamidine cyclo-ligase (357 aa).

The protein belongs to the AIR synthase family.

It localises to the cytoplasm. The catalysed reaction is 2-formamido-N(1)-(5-O-phospho-beta-D-ribosyl)acetamidine + ATP = 5-amino-1-(5-phospho-beta-D-ribosyl)imidazole + ADP + phosphate + H(+). It functions in the pathway purine metabolism; IMP biosynthesis via de novo pathway; 5-amino-1-(5-phospho-D-ribosyl)imidazole from N(2)-formyl-N(1)-(5-phospho-D-ribosyl)glycinamide: step 2/2. This chain is Phosphoribosylformylglycinamidine cyclo-ligase, found in Nitrobacter winogradskyi (strain ATCC 25391 / DSM 10237 / CIP 104748 / NCIMB 11846 / Nb-255).